The chain runs to 179 residues: Large ribosomal subunit protein uL6 (179 aa).

This sequence belongs to the universal ribosomal protein uL6 family. As to quaternary structure, part of the 50S ribosomal subunit.

Functionally, this protein binds to the 23S rRNA, and is important in its secondary structure. It is located near the subunit interface in the base of the L7/L12 stalk, and near the tRNA binding site of the peptidyltransferase center. This is Large ribosomal subunit protein uL6 from Prochlorococcus marinus (strain MIT 9515).